We begin with the raw amino-acid sequence, 88 residues long: Small ribosomal subunit protein bS20 (88 aa).

It belongs to the bacterial ribosomal protein bS20 family.

In terms of biological role, binds directly to 16S ribosomal RNA. The sequence is that of Small ribosomal subunit protein bS20 from Rhodopseudomonas palustris (strain BisA53).